A 471-amino-acid chain; its full sequence is MSSGSRSFFTPQETRLELPQGAAHQTPDITRPASPSENDRAPFLNGGPSDAREDVRMGAKALRNDSEKPAVGIMALAPILCYCAASITMTVVNKFTVSGRGFNMNLLVLLIQSTVGVTCVWIAERAGLIQLRGLNAKDAWNWMPLSIMLVFVIWTGSKALQYLNISVYTIFKNLTIILIAYGEVMWFGGRVTRIVLCSFLFMVLSSVIAAWSDISNVFAIGNLSMPHTPDSIMGGMAKDPITGALFPAFDPLKTEKDAINAQLQSASANDVIEGFQGYGLLSSGYVWMALNCICSATYVLLMRKRIKVTGFKDWDTMFYNNFLSIPVLLLMSFLVEDWSYANLHKNFPDDKQTKLISAIVFSGACAILISYTTAWCIRATSSTTYSMVGALNKLPVALSGMVFFHDPPVTFSSVSAIAVGFFAGLVYAFGKNKQAEAAKLGGHASANGSSSMSGSKDGSSLPMHTFNDRKD.

The segment covering 1–13 has biased composition (polar residues); it reads MSSGSRSFFTPQE. The tract at residues 1–52 is disordered; that stretch reads MSSGSRSFFTPQETRLELPQGAAHQTPDITRPASPSENDRAPFLNGGPSDAR. Over 1 to 70 the chain is Cytoplasmic; the sequence is MSSGSRSFFT…ALRNDSEKPA (70 aa). The chain crosses the membrane as a helical span at residues 71–91; it reads VGIMALAPILCYCAASITMTV. At 92–101 the chain is on the lumenal side; it reads VNKFTVSGRG. The chain crosses the membrane as a helical span at residues 102–122; it reads FNMNLLVLLIQSTVGVTCVWI. Residues 123–139 lie on the Cytoplasmic side of the membrane; the sequence is AERAGLIQLRGLNAKDA. The helical transmembrane segment at 140-160 threads the bilayer; it reads WNWMPLSIMLVFVIWTGSKAL. Residues 161-166 lie on the Lumenal side of the membrane; that stretch reads QYLNIS. N-linked (GlcNAc...) asparagine glycosylation is present at Asn164. The chain crosses the membrane as a helical span at residues 167–187; sequence VYTIFKNLTIILIAYGEVMWF. At 188-193 the chain is on the cytoplasmic side; sequence GGRVTR. The chain crosses the membrane as a helical span at residues 194–214; the sequence is IVLCSFLFMVLSSVIAAWSDI. Residues 215–279 are Lumenal-facing; that stretch reads SNVFAIGNLS…DVIEGFQGYG (65 aa). Asn222 carries an N-linked (GlcNAc...) asparagine glycan. A helical transmembrane segment spans residues 280 to 300; sequence LLSSGYVWMALNCICSATYVL. Residues 301 to 315 are Cytoplasmic-facing; that stretch reads LMRKRIKVTGFKDWD. Residues 316 to 336 traverse the membrane as a helical segment; the sequence is TMFYNNFLSIPVLLLMSFLVE. Over 337 to 354 the chain is Lumenal; sequence DWSYANLHKNFPDDKQTK. The chain crosses the membrane as a helical span at residues 355-375; the sequence is LISAIVFSGACAILISYTTAW. The Cytoplasmic portion of the chain corresponds to 376 to 383; sequence CIRATSST. The chain crosses the membrane as a helical span at residues 384-404; the sequence is TYSMVGALNKLPVALSGMVFF. The Lumenal portion of the chain corresponds to 405 to 408; that stretch reads HDPP. Residues 409–429 form a helical membrane-spanning segment; it reads VTFSSVSAIAVGFFAGLVYAF. Topologically, residues 430 to 471 are cytoplasmic; the sequence is GKNKQAEAAKLGGHASANGSSSMSGSKDGSSLPMHTFNDRKD. Residues 442-460 show a composition bias toward low complexity; it reads GHASANGSSSMSGSKDGSS. Residues 442 to 471 form a disordered region; it reads GHASANGSSSMSGSKDGSSLPMHTFNDRKD.

Belongs to the TPT transporter family. SLC35D subfamily. Homooligomer.

It localises to the golgi apparatus membrane. The protein resides in the cytoplasmic vesicle membrane. Its subcellular location is the endoplasmic reticulum membrane. In terms of biological role, involved in the import of GDP-mannose from the cytoplasm into the Golgi lumen. The polypeptide is GDP-mannose transporter (VRG4) (Mycosarcoma maydis (Corn smut fungus)).